A 318-amino-acid polypeptide reads, in one-letter code: Holliday junction branch migration complex subunit RuvB (318 aa).

Positions 1-168 (MPENLEIRPS…FGYVAKIVDY (168 aa)) are large ATPase domain (RuvB-L). 9 residues coordinate ATP: Ile-7, Arg-8, Gly-49, Lys-52, Thr-53, Thr-54, Arg-158, Tyr-168, and Arg-205. Thr-53 serves as a coordination point for Mg(2+). Residues 169–239 (TLEDMIQIIR…IVNKTFDSIG (71 aa)) form a small ATPAse domain (RuvB-S) region. A head domain (RuvB-H) region spans residues 242–318 (NQGLSQINIE…RDYLLELKTN (77 aa)). Residues Arg-278, Lys-297, and Arg-302 each coordinate DNA.

The protein belongs to the RuvB family. In terms of assembly, homohexamer. Forms an RuvA(8)-RuvB(12)-Holliday junction (HJ) complex. HJ DNA is sandwiched between 2 RuvA tetramers; dsDNA enters through RuvA and exits via RuvB. An RuvB hexamer assembles on each DNA strand where it exits the tetramer. Each RuvB hexamer is contacted by two RuvA subunits (via domain III) on 2 adjacent RuvB subunits; this complex drives branch migration. In the full resolvosome a probable DNA-RuvA(4)-RuvB(12)-RuvC(2) complex forms which resolves the HJ.

Its subcellular location is the cytoplasm. It catalyses the reaction ATP + H2O = ADP + phosphate + H(+). The RuvA-RuvB-RuvC complex processes Holliday junction (HJ) DNA during genetic recombination and DNA repair, while the RuvA-RuvB complex plays an important role in the rescue of blocked DNA replication forks via replication fork reversal (RFR). RuvA specifically binds to HJ cruciform DNA, conferring on it an open structure. The RuvB hexamer acts as an ATP-dependent pump, pulling dsDNA into and through the RuvAB complex. RuvB forms 2 homohexamers on either side of HJ DNA bound by 1 or 2 RuvA tetramers; 4 subunits per hexamer contact DNA at a time. Coordinated motions by a converter formed by DNA-disengaged RuvB subunits stimulates ATP hydrolysis and nucleotide exchange. Immobilization of the converter enables RuvB to convert the ATP-contained energy into a lever motion, pulling 2 nucleotides of DNA out of the RuvA tetramer per ATP hydrolyzed, thus driving DNA branch migration. The RuvB motors rotate together with the DNA substrate, which together with the progressing nucleotide cycle form the mechanistic basis for DNA recombination by continuous HJ branch migration. Branch migration allows RuvC to scan DNA until it finds its consensus sequence, where it cleaves and resolves cruciform DNA. This is Holliday junction branch migration complex subunit RuvB from Mesomycoplasma hyopneumoniae (strain 232) (Mycoplasma hyopneumoniae).